Reading from the N-terminus, the 84-residue chain is Large ribosomal subunit protein uL23 (84 aa).

It belongs to the universal ribosomal protein uL23 family. As to quaternary structure, part of the 50S ribosomal subunit. Contacts protein L29.

Binds to 23S rRNA. One of the proteins that surrounds the polypeptide exit tunnel on the outside of the ribosome. In Thermoplasma acidophilum (strain ATCC 25905 / DSM 1728 / JCM 9062 / NBRC 15155 / AMRC-C165), this protein is Large ribosomal subunit protein uL23.